A 188-amino-acid polypeptide reads, in one-letter code: COMM domain-containing protein 1 (188 aa).

Residues 1-122 (MAAELEGSKC…CWDRGLRSLS (122 aa)) are sufficient for interaction with SLC12A2. Cu cation is bound by residues H100, M109, and H133. The COMM domain maps to 117 to 185 (GLRSLSWRVD…EVEESISTLM (69 aa)). The interval 124 to 188 (RVDGKSQSRH…ESISTLMQPA (65 aa)) is required for binding to PtdIns(4,5)P2.

This sequence belongs to the COMM domain-containing protein 1 family. Component of the commander complex consisting of the CCC subcomplex and the retriever subcomplex. Component of the CCC (COMMD/CCDC22/CCDC93) subcomplex consisting of COMMD1, COMMD2, COMMD3, COMMD4, COMMD5, COMMD6, COMMD7, COMMD8, COMMD9, COMMD10, CCDC22 and CCDC93; within the complex forms a heterodimer with COMMD6. Interacts with VPS35L; the interaction associates the CCC complex with the retriever complex. Identified in a complex with an E3 ubiquitin ligase complex composed of TCEB1/elongin C, CUL2, SOCS1 and RBX1; in the complex interacts directly with SOCS1 and CUL2. Identified in a complex with NF-kappa-B. Interacts directly with SLC12A2. Interacts directly with ATP7B (via the N-terminal region). Interacts with ATP7A. Interacts with FAM107A; this interaction stabilizes COMMD1 in the nucleus. Interacts with CCS, CDKN2A, RELA, REL, RELB, NFKB1/p105, NFKB2/p100, NFKBIB, SCNN1D, SCNN1B, CFTR, CLU, SGK1, AKT1, CUL1, CUL2, CUL3, CUL4A, CUL4B, CUL5, CUL7, HIF1A. Ubiquitinated; undergoes both 'Lys-63'- and 'Lys-48'-linked polyubiquitination. Ubiquitinated by XIAP, leading to its proteasomal degradation.

The protein localises to the nucleus. It is found in the cytoplasm. The protein resides in the endosome membrane. Its subcellular location is the cytoplasmic vesicle. It localises to the early endosome. The protein localises to the recycling endosome. Functionally, scaffold protein in the commander complex that is essential for endosomal recycling of transmembrane cargos; the commander complex is composed of the CCC subcomplex and the retriever subcomplex. Can modulate activity of cullin-RING E3 ubiquitin ligase (CRL) complexes by displacing CAND1; in vitro promotes CRL E3 activity and dissociates CAND1 from CUL1 and CUL2. Promotes ubiquitination of NF-kappa-B subunit RELA and its subsequent proteasomal degradation. Down-regulates NF-kappa-B activity. Involved in the regulation of membrane expression and ubiquitination of SLC12A2. Modulates Na(+) transport in epithelial cells by regulation of apical cell surface expression of amiloride-sensitive sodium channel (ENaC) subunits and by promoting their ubiquitination presumably involving NEDD4L. Promotes the localization of SCNN1D to recycling endosomes. Promotes CFTR cell surface expression through regulation of its ubiquitination. Down-regulates SOD1 activity by interfering with its homodimerization. Plays a role in copper ion homeostasis. Involved in copper-dependent ATP7A trafficking between the trans-Golgi network and vesicles in the cell periphery; the function is proposed to depend on its association within the CCC complex and cooperation with the WASH complex on early endosomes. Can bind one copper ion per monomer. May function to facilitate biliary copper excretion within hepatocytes. Binds to phosphatidylinositol 4,5-bisphosphate (PtdIns(4,5)P2). Involved in the regulation of HIF1A-mediated transcription; competes with ARNT/Hif-1-beta for binding to HIF1A resulting in decreased DNA binding and impaired transcriptional activation by HIF-1. Negatively regulates neuroblastoma G1/S phase cell cycle progression and cell proliferation by stimulating ubiquitination of NF-kappa-B subunit RELA and NF-kappa-B degradation in a FAM107A- and actin-dependent manner. In Bos taurus (Bovine), this protein is COMM domain-containing protein 1 (COMMD1).